We begin with the raw amino-acid sequence, 82 residues long: RNA-binding protein Hfq (82 aa).

Residues aspartate 9–isoleucine 69 enclose the Sm domain.

Belongs to the Hfq family. Homohexamer.

In terms of biological role, RNA chaperone that binds small regulatory RNA (sRNAs) and mRNAs to facilitate mRNA translational regulation in response to envelope stress, environmental stress and changes in metabolite concentrations. Also binds with high specificity to tRNAs. This is RNA-binding protein Hfq from Leptospira borgpetersenii serovar Hardjo-bovis (strain L550).